The primary structure comprises 154 residues: MSDELTKEQTALLRNAFNAFDPEKNGYINTAMVGTILSMLGHQLDDATLADIIAEVDEDGSGQIEFEEFTTLAARFLVEEDAEAMMAELKEAFRLYDKEGNGYITTGVLREILRELDDKLTNDDLDMMIEEIDSDGSGTVDFDEFMEVMTGGDD.

EF-hand domains follow at residues 8–43 (EQTA…LGHQ), 44–79 (LDDA…FLVE), 84–119 (AMMA…LDDK), and 120–154 (LTND…GGDD). Ca(2+) is bound by residues Asp-57, Asp-59, Ser-61, Gln-63, and Glu-68. Residues Asp-133, Asp-135, Ser-137, Thr-139, and Glu-144 each contribute to the Ca(2+) site.

The protein belongs to the troponin C family. As to expression, present only in adult muscles.

The polypeptide is Troponin C, isoform 1 (TpnC41C) (Drosophila melanogaster (Fruit fly)).